Reading from the N-terminus, the 639-residue chain is Testicular spindle-associated protein SHCBP1L (639 aa).

Disordered regions lie at residues 1–25 and 48–75; these read MESDATTSEPKASVGSDSSPAEQTV and VASPRPVKGKAARRRLQLPPVTQAETCD. Ser3 is subject to O-acetylserine. Phosphoserine occurs at positions 8, 19, and 50. Residues 54 to 63 show a composition bias toward basic residues; that stretch reads VKGKAARRRL. Residues 285–312 are a coiled coil; it reads IAQRFKKTLEKYKNKRVELIEYQSNIKE. PbH1 repeat units lie at residues 479–500, 501–523, 524–557, and 560–582; these read SGHLTLENCLLKCEGTGVCVLT, GASLTITNSEITGAQGAGVELYP, GSIAILEGNEIHHCNNLRTSDSSKSTLGGVNMKV, and APKLKMTNNHIYNNNGYGVSILQ. N6-acetyllysine is present on Lys556. Lys631 carries the N6-acetyllysine modification.

As to quaternary structure, interacts with HSPA2; this interaction may promote the recruitment of HSPA2 to the spindle. As to expression, expressed in pachytene spermatocytes and elongating spermatids inside the seminiferous tubules. Not detected in ovary (at protein level). Testis-specific.

It localises to the cytoplasm. The protein localises to the cytoskeleton. It is found in the spindle. Functionally, testis-specific spindle-associated factor that plays a role in spermatogenesis. In association with HSPA2, participates in the maintenance of spindle integrity during meiosis in male germ cells. The chain is Testicular spindle-associated protein SHCBP1L from Mus musculus (Mouse).